A 183-amino-acid polypeptide reads, in one-letter code: Helofensin-1 (183 aa).

The N-terminal stretch at 1-26 is a signal peptide; sequence MQMDWLFIAVVSAIGLLSSGVPGTQG. Residues 27-64 form a C(6)C(4)C(9)C(6)CC 1; approximate repeat; the sequence is AYTTEQCRALNGTCRFYACFPKNVVIGKCDWLGWGCCA. A C(6)C(4)C(9)C(6)CC 2; approximate repeat occupies 65–101; it reads RTPLERCTAKKGTCTASGCTETDTDHGPCDGGAQCCQ. The C(6)C(4)C(9)C(6)CC 3; approximate repeat unit spans residues 102-139; sequence RDPVKYCKFHGNVCGRGKCPMDHIPIGEQCMPGYPCCK. Residues 140 to 177 form a C(6)C(4)C(9)C(6)CC 4; approximate repeat; the sequence is RDGPAYCKSKGGKCLRRCSQIVPTDIIGVCADGVPCCK.

Belongs to the beta-defensin family. Helofensin subfamily. As to expression, expressed by the mandibular venom gland.

It localises to the secreted. In terms of biological role, lethal toxin which possesses an inhibitory effect on direct electrical stimulation of the isolated hemi-diaphragm of mice. Neither hemorrhagic nor hemolytic activities are detected. Phospholipase A2 activity, proteolytic activity and arginine esterolytic activity are absent. The sequence is that of Helofensin-1 from Heloderma suspectum cinctum (Banded Gila monster).